Consider the following 1050-residue polypeptide: uncharacterized protein (1050 aa).

At Met1–Cys83 the chain is on the cytoplasmic side. Ser9 and Ser60 each carry phosphoserine. Thr64 bears the Phosphothreonine mark. The chain crosses the membrane as a helical span at residues Phe84 to Ile104. At Gly105 to Thr112 the chain is on the extracellular side. A helical membrane pass occupies residues Leu113–Ile133. At Cys134–Tyr146 the chain is on the cytoplasmic side. A helical transmembrane segment spans residues Ala147–Ile169. Residues Leu170–Tyr202 are Extracellular-facing. Residue Asn175 is glycosylated (N-linked (GlcNAc...) asparagine). The chain crosses the membrane as a helical span at residues Trp203–Gly223. Residues Ser224–Asn232 lie on the Cytoplasmic side of the membrane. Residues Ala233–His253 form a helical membrane-spanning segment. Topologically, residues Pro254–Thr295 are extracellular. Residue Ser270 is modified to Phosphoserine. Position 271 is a phosphothreonine (Thr271). A helical membrane pass occupies residues Phe296 to Leu316. At Lys317–Thr334 the chain is on the cytoplasmic side. Residues Phe335–Leu355 form a helical membrane-spanning segment. The Extracellular segment spans residues Leu356–Pro368. Residues Leu369–Gly389 traverse the membrane as a helical segment. The Cytoplasmic portion of the chain corresponds to Ala390 to Asp417. A helical transmembrane segment spans residues Ile418–Ile438. The Extracellular segment spans residues Asn439–Ser442. A helical membrane pass occupies residues Ser443 to Leu463. At Arg464–Arg480 the chain is on the cytoplasmic side. A helical transmembrane segment spans residues Arg481–Val497. Over Asp498–Arg499 the chain is Extracellular. A helical transmembrane segment spans residues Leu500–Cys520. At Pro521–Leu1050 the chain is on the cytoplasmic side. Ser901 carries the post-translational modification Phosphoserine. A disordered region spans residues Glu915–Ser943. Residues Thr916–Lys928 are compositionally biased toward polar residues. Ser936 bears the Phosphoserine mark. The residue at position 939 (Thr939) is a Phosphothreonine.

This sequence belongs to the SLC12A transporter family.

Its subcellular location is the membrane. This is an uncharacterized protein from Schizosaccharomyces pombe (strain 972 / ATCC 24843) (Fission yeast).